Reading from the N-terminus, the 261-residue chain is MLIVLSPAKSLDYETPARTKTHTLPRFIERSAVLIDRLRKLAPQDVGALMDISDKLAVLNVTRYAEWSETFTAANSKQAVLAFNGDVYDGFDAKSLSADDLGFAQKHVRILSGLYGVLRPMDWMQPYRLEMGTRLDNAAGKDLYAFWGDDVTRLLNDDMAGLKHEGAPTLVNLASEEYFKVVRPKVLNARIITPVFEDWKGGRYKIISFHAKRARGTMARYAVTHRVTEPAALKRFAEDGYAFDAAASNDGRWVFRRRLED.

It belongs to the UPF0246 family.

This Cupriavidus pinatubonensis (strain JMP 134 / LMG 1197) (Cupriavidus necator (strain JMP 134)) protein is UPF0246 protein Reut_A1014.